The chain runs to 551 residues: Structure-specific endonuclease subunit MUS81 (551 aa).

Disordered regions lie at residues 84-131 (HLAS…VGYW) and 229-259 (FRPE…QQRP). Positions 92-107 (APSSPSGKKGASKGPP) are enriched in low complexity. Serine 95 carries the phosphoserine modification. Residues 110-131 (VQDSSMPVPTQPQAGSTSVGYW) show a composition bias toward polar residues. The segment at 124–244 (GSTSVGYWPA…HGEDSAVPEA (121 aa)) is interaction with BLM. Residues 131–230 (WPAQNSGARE…GLSTRHAGFR (100 aa)) form a winged helix domain (WHD); critical for endonuclease activity region. Positions 229–238 (FRPEEHHGED) are enriched in basic and acidic residues. One can recognise an ERCC4 domain in the interval 270-372 (LLCVDIGETR…HRVYLVEEHG (103 aa)). Residues aspartate 274, glutamate 277, and aspartate 307 contribute to the active site. Residues aspartate 274, glutamate 277, aspartate 307, glutamate 333, and arginine 334 each coordinate Mg(2+). Positions 471-545 (VREVFARQLM…LSRTLYQLYC (75 aa)) are helix-hairpin-helix (2HhH); involved in DNA recognition and bending.

This sequence belongs to the XPF family. As to quaternary structure, part of the heterodimeric DNA structure-specific endonuclease complex MUS81-EME1. Part of the heterodimeric DNA structure-specific endonuclease complex MUS81-EME2. Interacts with BLM; may stimulate the endonuclease activity of MUS81. Interacts with SLX4/BTBD12; this interaction is direct and links the MUS81-EME1 complex to SLX4, which may coordinate the action of the structure-specific endonuclease during DNA repair. Interacts with DCLRE1B/Apollo. Interacts with RECQL5; this interaction stimulates mitotic DNA synthesis. Interacts with CHEK2. The cofactor is Mg(2+). Expressed highly in testis. Expressed also in bone marrow, brain, thymus and to a lesser extent in heart and skeletal muscle, colon, kidney and spleen.

The protein localises to the nucleus. It is found in the nucleolus. Its function is as follows. Catalytic subunit of two functionally distinct, structure-specific, heterodimeric DNA endonucleases MUS81-EME1 and MUS81-EME2 that are involved in the maintenance of genome stability. Both endonucleases have essentially the same substrate specificity though MUS81-EME2 is more active than its MUS81-EME1 counterpart. Both cleave 3'-flaps and nicked Holliday junctions, and exhibit limited endonuclease activity with 5' flaps and nicked double-stranded DNAs. MUS81-EME2 which is active during the replication of DNA is more specifically involved in replication fork processing. Replication forks frequently encounter obstacles to their passage, including DNA base lesions, DNA interstrand cross-links, difficult-to-replicate sequences, transcription bubbles, or tightly bound proteins. One mechanism for the restart of a stalled replication fork involves nucleolytic cleavage mediated by the MUS81-EME2 endonuclease. By acting upon the stalled fork, MUS81-EME2 generates a DNA double-strand break (DSB) that can be repaired by homologous recombination, leading to the restoration of an active fork. MUS81-EME2 could also function in telomere maintenance. MUS81-EME1, on the other hand, is active later in the cell cycle and functions in the resolution of mitotic recombination intermediates including the Holliday junctions, the four-way DNA intermediates that form during homologous recombination. The chain is Structure-specific endonuclease subunit MUS81 from Mus musculus (Mouse).